The following is a 205-amino-acid chain: Small ribosomal subunit protein uS4 (205 aa).

Residues 1–49 (MSKRQSAKYKLDRRMGENIWGRPKSPVNRREYGPGQHGQRRKGKLSDFG) are disordered. One can recognise an S4 RNA-binding domain in the interval 94–157 (SRLDAIVFRA…KQLTVVLESV (64 aa)).

This sequence belongs to the universal ribosomal protein uS4 family. As to quaternary structure, part of the 30S ribosomal subunit. Contacts protein S5. The interaction surface between S4 and S5 is involved in control of translational fidelity.

One of the primary rRNA binding proteins, it binds directly to 16S rRNA where it nucleates assembly of the body of the 30S subunit. Its function is as follows. With S5 and S12 plays an important role in translational accuracy. This is Small ribosomal subunit protein uS4 from Chelativorans sp. (strain BNC1).